The sequence spans 72 residues: Translation initiation factor IF-1 (72 aa).

Positions 1–72 constitute an S1-like domain; that stretch reads MSKEEVLEFS…TKGRIIYRYK (72 aa).

This sequence belongs to the IF-1 family. Component of the 30S ribosomal translation pre-initiation complex which assembles on the 30S ribosome in the order IF-2 and IF-3, IF-1 and N-formylmethionyl-tRNA(fMet); mRNA recruitment can occur at any time during PIC assembly.

The protein resides in the cytoplasm. Its function is as follows. One of the essential components for the initiation of protein synthesis. Stabilizes the binding of IF-2 and IF-3 on the 30S subunit to which N-formylmethionyl-tRNA(fMet) subsequently binds. Helps modulate mRNA selection, yielding the 30S pre-initiation complex (PIC). Upon addition of the 50S ribosomal subunit IF-1, IF-2 and IF-3 are released leaving the mature 70S translation initiation complex. In Bartonella henselae (strain ATCC 49882 / DSM 28221 / CCUG 30454 / Houston 1) (Rochalimaea henselae), this protein is Translation initiation factor IF-1.